Here is a 123-residue protein sequence, read N- to C-terminus: Putative iron-sulfur cluster insertion protein ErpA (123 aa).

Iron-sulfur cluster contacts are provided by C51, C115, and C117.

Belongs to the HesB/IscA family. As to quaternary structure, homodimer. Iron-sulfur cluster serves as cofactor.

In terms of biological role, required for insertion of 4Fe-4S clusters. The protein is Putative iron-sulfur cluster insertion protein ErpA of Burkholderia multivorans (strain ATCC 17616 / 249).